The chain runs to 507 residues: Probable lipid II flippase MurJ (507 aa).

The next 13 membrane-spanning stretches (helical) occupy residues 3-23, 54-74, 92-112, 132-152, 156-176, 185-205, 268-288, 310-330, 351-371, 379-399, 405-425, 438-458, and 472-492; these read LFRS…FGLV, IFAE…KMLI, LTLI…ILCI, ITIP…ILNS, FAAF…FTLI, ISIS…MFIC, IYQF…LPEM, IGLL…HPIT, ISAF…TPIF, TPLK…LLLM, IGIA…LYSY, IKLF…IIAL, and LLIK…IFFG.

It belongs to the MurJ/MviN family.

It is found in the cell inner membrane. It participates in cell wall biogenesis; peptidoglycan biosynthesis. Functionally, involved in peptidoglycan biosynthesis. Transports lipid-linked peptidoglycan precursors from the inner to the outer leaflet of the cytoplasmic membrane. This is Probable lipid II flippase MurJ from Rickettsia prowazekii (strain Madrid E).